Consider the following 219-residue polypeptide: Probable GTP-binding protein EngB (219 aa).

In terms of domain architecture, EngB-type G spans 40 to 212 (LLPEIAFIGK…KASLAKCIIK (173 aa)). Residues 48–55 (GKSNVGKS), 75–79 (GRTGQ), 93–96 (DLPG), 160–163 (TKFD), and 191–193 (VSS) each bind GTP. Ser-55 and Thr-77 together coordinate Mg(2+).

Belongs to the TRAFAC class TrmE-Era-EngA-EngB-Septin-like GTPase superfamily. EngB GTPase family. Mg(2+) serves as cofactor.

Its function is as follows. Necessary for normal cell division and for the maintenance of normal septation. This Rickettsia canadensis (strain McKiel) protein is Probable GTP-binding protein EngB.